The sequence spans 317 residues: DNA-directed RNA polymerase III subunit RPC6 (317 aa).

The protein belongs to the eukaryotic RPC34/RPC39 RNA polymerase subunit family. Component of the RNA polymerase III (Pol III) complex consisting of 17 subunits. Interacts with BRF1/TDS4.

It localises to the nucleus. In terms of biological role, DNA-dependent RNA polymerase catalyzes the transcription of DNA into RNA using the four ribonucleoside triphosphates as substrates. Specific peripheric component of RNA polymerase III which synthesizes small RNAs, such as 5S rRNA and tRNAs. Involved in recruitment of Pol III to the preinitiation complex. Involved in the configuration of an initiation-competent form of RNA polymerase. In Saccharomyces cerevisiae (strain ATCC 204508 / S288c) (Baker's yeast), this protein is DNA-directed RNA polymerase III subunit RPC6 (RPC34).